The sequence spans 311 residues: MKWSEISVHTTNEAVEPITNILHEAGASGVVIEDPLDLVKERENVYGEIYQLDPNDYPEEGVIVKAYLPMNSFLMETVDEIKEAINNLLLYDIDLGRNTLSICEVNEEEWATAWKKYYHPVKISEKFTIVPTWEEYTPVHSDELIIEMDPGMAFGTGTHPTTVLCIQALERYVKENDTVIDVGTGSGILSVAAAMVGAKDIQAFDLDTVAVESAKQNIELNGVSEQVTVKQNNLLDGISGEHDVIVANILAEVILRFTDQAYDLLKKDGYFITSGIIGQKKLQVKTALEEAGFDIVEVLSMEDWVSIIAKK.

S-adenosyl-L-methionine-binding residues include Thr-162, Gly-183, Asp-205, and Asn-248.

Belongs to the methyltransferase superfamily. PrmA family.

The protein localises to the cytoplasm. The catalysed reaction is L-lysyl-[protein] + 3 S-adenosyl-L-methionine = N(6),N(6),N(6)-trimethyl-L-lysyl-[protein] + 3 S-adenosyl-L-homocysteine + 3 H(+). Functionally, methylates ribosomal protein L11. The protein is Ribosomal protein L11 methyltransferase of Bacillus pumilus (strain SAFR-032).